A 127-amino-acid chain; its full sequence is Small ribosomal subunit protein uS12 (127 aa).

Position 89 is a 3-methylthioaspartic acid (Asp89).

Belongs to the universal ribosomal protein uS12 family. Part of the 30S ribosomal subunit. Contacts proteins S8 and S17. May interact with IF1 in the 30S initiation complex.

Its function is as follows. With S4 and S5 plays an important role in translational accuracy. Interacts with and stabilizes bases of the 16S rRNA that are involved in tRNA selection in the A site and with the mRNA backbone. Located at the interface of the 30S and 50S subunits, it traverses the body of the 30S subunit contacting proteins on the other side and probably holding the rRNA structure together. The combined cluster of proteins S8, S12 and S17 appears to hold together the shoulder and platform of the 30S subunit. This Campylobacter fetus subsp. fetus (strain 82-40) protein is Small ribosomal subunit protein uS12.